Here is a 441-residue protein sequence, read N- to C-terminus: Damage-control phosphatase ARMT1 (441 aa).

The residue at position 2 (alanine 2) is an N-acetylalanine. N6-acetyllysine is present on lysine 40. Serine 102 is subject to Phosphoserine. Residues aspartate 253 and asparagine 254 each contribute to the Mn(2+) site. 253–254 (DN) serves as a coordination point for substrate. S-adenosyl-L-methionine is bound by residues glutamate 258 and aspartate 291. Mn(2+) is bound at residue aspartate 291. Residues 367-371 (DLNYR) and lysine 404 contribute to the substrate site. A Subfamily III RTxK motif motif is present at residues 401–404 (RTLK).

It belongs to the damage-control phosphatase family. Sugar phosphate phosphatase III subfamily. Requires Mn(2+) as cofactor. It depends on Ni(2+) as a cofactor. Automethylated.

It carries out the reaction beta-D-fructose 1-phosphate + H2O = D-fructose + phosphate. The catalysed reaction is beta-D-fructose 6-phosphate = dihydroxyacetone + D-glyceraldehyde 3-phosphate. It catalyses the reaction L-glutamyl-[protein] + S-adenosyl-L-methionine = [protein]-L-glutamate 5-O-methyl ester + S-adenosyl-L-homocysteine. Metal-dependent phosphatase that shows phosphatase activity against several substrates, including fructose-1-phosphate and fructose-6-phosphate. Its preference for fructose-1-phosphate, a strong glycating agent that causes DNA damage rather than a canonical yeast metabolite, suggests a damage-control function in hexose phosphate metabolism. Has also been shown to have O-methyltransferase activity that methylates glutamate residues of target proteins to form gamma-glutamyl methyl ester residues. Possibly methylates PCNA, suggesting it is involved in the DNA damage response. The protein is Damage-control phosphatase ARMT1 of Homo sapiens (Human).